Here is a 195-residue protein sequence, read N- to C-terminus: Transcriptional regulator GfcR (195 aa).

It belongs to the purine/pyrimidine phosphoribosyltransferase family. GfcR subfamily.

The chain is Transcriptional regulator GfcR from Picrophilus torridus (strain ATCC 700027 / DSM 9790 / JCM 10055 / NBRC 100828 / KAW 2/3).